Reading from the N-terminus, the 296-residue chain is Triplex capsid protein 2 (296 aa).

Belongs to the herpesviridae TRX2 protein family. In terms of assembly, interacts with TRX1 and major capisd protein/MCP.

It is found in the virion. Its subcellular location is the host nucleus. Functionally, structural component of the T=16 icosahedral capsid. The capsid is composed of pentamers and hexamers of major capsid protein/MCP, which are linked together by heterotrimers called triplexes. These triplexes are formed by a single molecule of triplex protein 1/TRX1 and two copies of triplex protein 2/TRX2. Additionally, TRX1 is required for efficient transport of TRX2 to the nucleus, which is the site of capsid assembly. The polypeptide is Triplex capsid protein 2 (Human herpesvirus 6A (strain Uganda-1102) (HHV-6 variant A)).